A 156-amino-acid chain; its full sequence is Ribonuclease pancreatic (156 aa).

The first 28 residues, 1–28 (MALEKSLVLLPLLVLILLVLGWVQPSLG), serve as a signal peptide directing secretion. Substrate is bound by residues Lys-35 and Arg-38. His-40 serves as the catalytic Proton acceptor. Asn-50 and Asn-62 each carry an N-linked (GlcNAc...) asparagine glycan. Intrachain disulfides connect Cys-54-Cys-112, Cys-68-Cys-123, Cys-86-Cys-138, and Cys-93-Cys-100. Substrate is bound by residues 69–73 (KPVNT) and Lys-94. A glycan (N-linked (GlcNAc...) asparagine) is linked at Asn-104. Residue Arg-113 participates in substrate binding. Residue His-147 is the Proton donor of the active site.

The protein belongs to the pancreatic ribonuclease family. As to quaternary structure, monomer. Interacts with and forms tight 1:1 complexes with RNH1. Dimerization of two such complexes may occur. Interaction with RNH1 inhibits this protein. As to expression, pancreas and other tissues and body fluids (indicating it may have other physiological functions besides its role in digestion).

Its subcellular location is the secreted. It carries out the reaction an [RNA] containing cytidine + H2O = an [RNA]-3'-cytidine-3'-phosphate + a 5'-hydroxy-ribonucleotide-3'-[RNA].. The enzyme catalyses an [RNA] containing uridine + H2O = an [RNA]-3'-uridine-3'-phosphate + a 5'-hydroxy-ribonucleotide-3'-[RNA].. Endonuclease that catalyzes the cleavage of RNA on the 3' side of pyrimidine nucleotides. Acts on single-stranded and double-stranded RNA. The chain is Ribonuclease pancreatic (RNASE1) from Pongo pygmaeus (Bornean orangutan).